A 153-amino-acid polypeptide reads, in one-letter code: Transcriptional repressor NrdR (153 aa).

A zinc finger spans residues 3-34; it reads CPSCFHNGTRVLDSRPVDEGRSIRRRRECESC. The 91-residue stretch at 49-139 folds into the ATP-cone domain; sequence LIVVKKEGTR…VYRQFKDLNV (91 aa).

Belongs to the NrdR family. Requires Zn(2+) as cofactor.

Functionally, negatively regulates transcription of bacterial ribonucleotide reductase nrd genes and operons by binding to NrdR-boxes. The protein is Transcriptional repressor NrdR of Bacillus cytotoxicus (strain DSM 22905 / CIP 110041 / 391-98 / NVH 391-98).